The following is a 261-amino-acid chain: Orotidine 5'-phosphate decarboxylase (261 aa).

Substrate is bound by residues D34, K56 to H58, D88 to T97, Y214, and R232. K90 (proton donor) is an active-site residue.

This sequence belongs to the OMP decarboxylase family.

It carries out the reaction orotidine 5'-phosphate + H(+) = UMP + CO2. Its pathway is pyrimidine metabolism; UMP biosynthesis via de novo pathway; UMP from orotate: step 2/2. The sequence is that of Orotidine 5'-phosphate decarboxylase (URA3) from Kodamaea ohmeri (Yeast).